Reading from the N-terminus, the 246-residue chain is MSGKDRLAIFPSRGAQMLMKGRLAGAQKGHGLLKKKADALQVRFRLILSKIIETKTLMGEVMKEAAFSLAEAKFTTGDFNQVVLQNVTKAQIKIRSKKDNVAGVTLPIFESYQDGSDTYELAGLARGGQQLAKLKKNFQSAVKLLVELASLQTSFVTLDEVIKITNRRVNAIEHVIIPRLERTLAYIISELDELEREEFYRLKKIQDKKKIIKDKAEAKKAALRAAGQDLRDSANLLDEGDEDLLF.

Belongs to the V-ATPase D subunit family. In terms of assembly, V-ATPase is a heteromultimeric enzyme made up of two complexes: the ATP-hydrolytic V1 complex and the proton translocation V0 complex. The V1 complex consists of three catalytic AB heterodimers that form a heterohexamer, three peripheral stalks each consisting of EG heterodimers, one central rotor including subunits D and F, and the regulatory subunits C and H. The proton translocation complex V0 consists of the proton transport subunit a, a ring of proteolipid subunits c9c'', rotary subunit d, subunits e and f, and the accessory subunits VhaAC45 and ATP6AP2.

In terms of biological role, subunit of the V1 complex of vacuolar(H+)-ATPase (V-ATPase), a multisubunit enzyme composed of a peripheral complex (V1) that hydrolyzes ATP and a membrane integral complex (V0) that translocates protons. V-ATPase is responsible for acidifying and maintaining the pH of intracellular compartments and in some cell types, is targeted to the plasma membrane, where it is responsible for acidifying the extracellular environment. This chain is V-type proton ATPase subunit D, found in Manduca sexta (Tobacco hawkmoth).